The following is a 148-amino-acid chain: Caltractin (148 aa).

4 EF-hand domains span residues 4–39 (EQKQ…LGFE), 40–75 (PKKE…KMGE), 77–112 (DSRE…LGEN), and 113–148 (MTDE…TSLF). The Ca(2+) site is built by Asp17, Asp19, Ser21, Thr23, Glu28, Asp53, Asp55, Ser57, Thr59, and Glu64. Asp126, Asp128, Asp130, Glu132, and Glu137 together coordinate Ca(2+).

The protein belongs to the centrin family. In terms of tissue distribution, ubiquitous.

Functionally, this calcium-binding protein is found in the basal body complexes (the functional homolog of the centrosome in animal cell). In mitotic cells it is specifically associated with the poles of the mitotic spindles at the sites of the duplicated basal body complexes. The polypeptide is Caltractin (Tetraselmis striata (Green microalga)).